A 243-amino-acid polypeptide reads, in one-letter code: Chromosome partition protein MukE (243 aa).

Residues 214-243 are disordered; it reads DSLALEKQADLNEVDDNDELEDELDDEEHA. Over residues 225-243 the composition is skewed to acidic residues; sequence NEVDDNDELEDELDDEEHA.

The protein belongs to the MukE family. Interacts, and probably forms a ternary complex, with MukF and MukB. The complex formation is stimulated by calcium or magnesium.

It is found in the cytoplasm. The protein resides in the nucleoid. Its function is as follows. Involved in chromosome condensation, segregation and cell cycle progression. May participate in facilitating chromosome segregation by condensation DNA from both sides of a centrally located replisome during cell division. Probably acts via its interaction with MukB and MukF. This Pasteurella multocida (strain Pm70) protein is Chromosome partition protein MukE.